The sequence spans 600 residues: Keratin, type II cuticular Hb4 (600 aa).

Residues 1–165 (MSCRSYRVSS…PNAQRVKKDE (165 aa)) are head. Residues 165 to 476 (EKEQIKTLNN…RLLEGEESRL (312 aa)) form the IF rod domain. Residues 166-200 (KEQIKTLNNKFASFIDKVRFLEQQNKLLETKWSFL) are coil 1A. The interval 201–210 (QEQKCIRSNL) is linker 1. Positions 211–311 (EPLFESYITN…YMEEIQLLQS (101 aa)) are coil 1B. Positions 312-328 (HISETSVIVKMDNSRDL) are linker 12. Residues 329–472 (NLDGIIAEVK…ATYRRLLEGE (144 aa)) are coil 2. The tail stretch occupies residues 473 to 600 (ESRLCEGVGP…STTTSCRTKY (128 aa)).

Belongs to the intermediate filament family. In terms of assembly, heterotetramer of two type I and two type II keratins. Expressed in the hair follicles.

This Homo sapiens (Human) protein is Keratin, type II cuticular Hb4 (KRT84).